Here is a 248-residue protein sequence, read N- to C-terminus: Oligo(A)/oligo(T)-binding protein (248 aa).

The DNA-binding element occupies Met1–Arg36. Disordered regions lie at residues Met1 to Gln127 and Thr219 to Ile248. 3 tandem repeats follow at residues Gly8–Gly12, Gly14–Gly18, and Gly26–Gly30. Residues Gly8–Gly30 are 3 X 5 AA repeats of G-R-K-P-G. Residues Gly12–Lys21 show a composition bias toward basic residues. Residues Gln37 to Thr71 are compositionally biased toward basic and acidic residues. 2 stretches are compositionally biased toward low complexity: residues His72 to Ser100 and Gln111 to Gln127.

In terms of assembly, binds as a dimer or higher oligomer.

In terms of biological role, DNA-binding protein that recognizes oligo(A).oligo(T) tracts (A.T DNA). Can bind to any 11 bp sequence in which 10 bases conform to an uninterrupted oligo(A).oligo(T) tract. This Saccharomyces cerevisiae (strain ATCC 204508 / S288c) (Baker's yeast) protein is Oligo(A)/oligo(T)-binding protein (DAT1).